The sequence spans 582 residues: uncharacterized protein (582 aa).

Basic and acidic residues predominate over residues 1-23; it reads MAHEGSRQVRDRGVTRSKAEKVR. Disordered regions lie at residues 1–29, 110–133, and 147–221; these read MAHEGSRQVRDRGVTRSKAEKVRPPTVPV, AVAEDPTWGEDEEPSACTTDSWAQ, and LENF…SSAG. A Phosphoserine modification is found at S242. 2 disordered regions span residues 310–331 and 551–582; these read RPSASCQQQRAGHSDVRLSAHH and LSSGVPEQEDKEGSTFPPVEQHPIQTGAPKPR. Polar residues predominate over residues 311-320; it reads PSASCQQQRA.

This is an uncharacterized protein from Homo sapiens (Human).